We begin with the raw amino-acid sequence, 350 residues long: Phospho-2-dehydro-3-deoxyheptonate aldolase, Phe-sensitive (350 aa).

The residue at position 244 (lysine 244) is an N6-acetyllysine.

This sequence belongs to the class-I DAHP synthase family. In terms of assembly, homotetramer.

It carries out the reaction D-erythrose 4-phosphate + phosphoenolpyruvate + H2O = 7-phospho-2-dehydro-3-deoxy-D-arabino-heptonate + phosphate. It participates in metabolic intermediate biosynthesis; chorismate biosynthesis; chorismate from D-erythrose 4-phosphate and phosphoenolpyruvate: step 1/7. In terms of biological role, stereospecific condensation of phosphoenolpyruvate (PEP) and D-erythrose-4-phosphate (E4P) giving rise to 3-deoxy-D-arabino-heptulosonate-7-phosphate (DAHP). The sequence is that of Phospho-2-dehydro-3-deoxyheptonate aldolase, Phe-sensitive (aroG) from Escherichia coli O157:H7.